Consider the following 157-residue polypeptide: Transcriptional repressor NrdR (157 aa).

The segment at 1–21 (MRCPYCGSEDSQVKDSRPAED) is disordered. The segment at 3-34 (CPYCGSEDSQVKDSRPAEDGNAIRRRRICPDC) is a zinc-finger region. Basic and acidic residues predominate over residues 11 to 21 (SQVKDSRPAED). One can recognise an ATP-cone domain in the interval 49–139 (LMIIKKTGRK…VYRDFSHAED (91 aa)).

The protein belongs to the NrdR family. The cofactor is Zn(2+).

Functionally, negatively regulates transcription of bacterial ribonucleotide reductase nrd genes and operons by binding to NrdR-boxes. In Sinorhizobium medicae (strain WSM419) (Ensifer medicae), this protein is Transcriptional repressor NrdR.